Consider the following 313-residue polypeptide: Tyrosine recombinase XerD (313 aa).

A Core-binding (CB) domain is found at 17-102; sequence EDNDVIIEQF…TLRRFFQYLY (86 aa). The Tyr recombinase domain maps to 123-307; that stretch reads RLPKDLSEQQ…ATERLKVLHQ (185 aa). Residues arginine 163, lysine 187, histidine 259, arginine 262, and histidine 285 contribute to the active site. The O-(3'-phospho-DNA)-tyrosine intermediate role is filled by tyrosine 294.

It belongs to the 'phage' integrase family. XerD subfamily. Forms a cyclic heterotetrameric complex composed of two molecules of XerC and two molecules of XerD, in which XerC interacts with XerD via its C-terminal region, XerD interacts with XerC via its C-terminal region and so on.

It is found in the cytoplasm. With respect to regulation, ftsK may regulate the catalytic switch between XerC and XerD in the heterotetrameric complex during the two steps of the recombination process. Its function is as follows. Site-specific tyrosine recombinase, which acts by catalyzing the cutting and rejoining of the recombining DNA molecules. Binds cooperatively to specific DNA consensus sequences that are separated from XerC binding sites by a short central region, forming the heterotetrameric XerC-XerD complex that recombines DNA substrates. The complex is essential to convert dimers of the bacterial chromosome into monomers to permit their segregation at cell division. It also contributes to the segregational stability of plasmids. In the complex XerD specifically exchanges the bottom DNA strands. This is Tyrosine recombinase XerD from Proteus mirabilis.